Here is a 1372-residue protein sequence, read N- to C-terminus: MSVVNFYGQLSNTQQFDQIRINIASPDQVRSWSFGEVTKPETINYRTFKPEKDGLFCARIFGPVKDYECLCGKYKRMKNRGITCEKCGVEVTVSRVRRERMGHIELAAPVAHIWFLKSLPSRISTLLDMTMRDVEKILYFENYVVVDPGLSILQKGELLTEEELQKAKDKYGEDAFTASIGAEVIQQMLKELDFSKLKQELYEELQTTSSEVKKKKLVKRLKLVENFLESENKPEWMIMDVLPVIPPEIRPLVMLDGGRFATSDLNELYRRVINRNNRLKKLIESKAPDIIVRNEKRMLQEAVDALFDNGRRGRAAKNANKRPFKSLSDMLKGKQGRFRQNLLGKRVDYSGRSVIVVGPELKLHQCGLPKKMALELFKPFIYSKLELYGIATTIKAAKRMVEAEKSEVWDVLEEVIREHPVLLNRAPTLHRLGIQAFEPLLIEGKAIQLHPLVCAAFNADFDGDQMAVHIPLSIEAQLEARVFMMSTNNILSPANGRPIIVPDKDIVLGLYYLTLAFDNEVGAGMMFSDLAEMEHALYNKFITIHTKIKYRRNQLNAEGKMVPVIIDTTYGRLMVGELLPSNPNIEFKCINKQLTKKDISLVIDLVYRHCGQKATVIFADQLMKLGFKYACSSGISFGMDDMVVPESKSTHINETQLEIKEFEQQYSNGLITYGEKYNKVVDAWSRCTDRVANDMMKEIATPPVNDAPNHQKINAIYMMAISGARGSFQQIKQLGGMRGLMTKSNGQIIQTPIISNFKEGLTEFECFNSANGMRKGQIDTALKTASSGYLTRKLVDVAQDCIITEKDCGTDKGIEVKSVIEGGEVIVPLAEKILGRTAAIDIFHPVTNDLILNKGELINEAKLEQIESAGFDRIMIKSVLTCESTTGICSICYGRDLATGTLVSEGEAIGVIAAQSIGEPGTQLTMRTFHIGGAATKGAEVSSVDASYDAKVKIISRNVVINSEERKIVMSRNCELLLLDNNGNEKARHKIPYGARLLVDDGDMVIKTQKLAEWDPYTIPIITEKSGKVLFKDMVEGISIRDVTDEATGIPSKVIIESKQYSRGAELRPRIQLLDAKGEVITLSNGLEARYYLPVGAVLSVEDGVQISVGDIIARIPKESTTTKDITGGLPRVAELVEARRPKDHAVIAEIDGRVEFGKDYKSKRRIIIHPIDETMSIEYMVPKGKHVVVNEGDFVKKGDLLIDGNPVLQDILKVMGVEVLANYIVNEVQAVYRLQGVKIDDKHIEVIIRQMLQKVEVTDSGGTTLLVGEKIDRHEFDEINEKAMKNGLKPAEAQLILQGITKASLQTRSFISAASFQETTRVLTEAAIAGKVDKLRGLKENVIVGRLVPAGTGYFMDKMRKAAAKLDEENV.

4 residues coordinate Zn(2+): cysteine 69, cysteine 71, cysteine 84, and cysteine 87. Residues aspartate 460, aspartate 462, and aspartate 464 each contribute to the Mg(2+) site. The Zn(2+) site is built by cysteine 808, cysteine 882, cysteine 889, and cysteine 892.

The protein belongs to the RNA polymerase beta' chain family. In terms of assembly, the RNAP catalytic core consists of 2 alpha, 1 beta, 1 beta' and 1 omega subunit. When a sigma factor is associated with the core the holoenzyme is formed, which can initiate transcription. Requires Mg(2+) as cofactor. Zn(2+) is required as a cofactor.

It carries out the reaction RNA(n) + a ribonucleoside 5'-triphosphate = RNA(n+1) + diphosphate. Its function is as follows. DNA-dependent RNA polymerase catalyzes the transcription of DNA into RNA using the four ribonucleoside triphosphates as substrates. This Rickettsia conorii (strain ATCC VR-613 / Malish 7) protein is DNA-directed RNA polymerase subunit beta'.